The sequence spans 82 residues: Cytochrome c-551 (82 aa).

4 residues coordinate heme c: cysteine 12, cysteine 15, histidine 16, and methionine 61.

Binds 1 heme c group covalently per subunit.

In Azotobacter vinelandii, this protein is Cytochrome c-551.